A 338-amino-acid polypeptide reads, in one-letter code: Large ribosomal subunit protein uL10 (338 aa).

Residues 297 to 338 form a disordered region; sequence PSAQQTQTQQSTAEEKKEEKKEEEKKGPSEEEIGSGLASLFG. A compositionally biased stretch (low complexity) spans 298 to 308; the sequence is SAQQTQTQQST. Residues 309–325 show a composition bias toward basic and acidic residues; it reads AEEKKEEKKEEEKKGPS.

It belongs to the universal ribosomal protein uL10 family. As to quaternary structure, part of the 50S ribosomal subunit. Forms part of the ribosomal stalk which helps the ribosome interact with GTP-bound translation factors. Forms a heptameric L10(L12)2(L12)2(L12)2 complex, where L10 forms an elongated spine to which the L12 dimers bind in a sequential fashion.

Forms part of the ribosomal stalk, playing a central role in the interaction of the ribosome with GTP-bound translation factors. The sequence is that of Large ribosomal subunit protein uL10 from Saccharolobus islandicus (strain M.14.25 / Kamchatka #1) (Sulfolobus islandicus).